The primary structure comprises 421 residues: Serine--tRNA ligase (421 aa).

229–231 (TSE) lines the L-serine pocket. ATP is bound by residues 260 to 262 (RKE) and Val276. Residue Glu283 participates in L-serine binding. 347-350 (EIVS) lines the ATP pocket. Thr383 provides a ligand contact to L-serine.

This sequence belongs to the class-II aminoacyl-tRNA synthetase family. Type-1 seryl-tRNA synthetase subfamily. As to quaternary structure, homodimer. The tRNA molecule binds across the dimer.

The protein resides in the cytoplasm. It carries out the reaction tRNA(Ser) + L-serine + ATP = L-seryl-tRNA(Ser) + AMP + diphosphate + H(+). The enzyme catalyses tRNA(Sec) + L-serine + ATP = L-seryl-tRNA(Sec) + AMP + diphosphate + H(+). It participates in aminoacyl-tRNA biosynthesis; selenocysteinyl-tRNA(Sec) biosynthesis; L-seryl-tRNA(Sec) from L-serine and tRNA(Sec): step 1/1. In terms of biological role, catalyzes the attachment of serine to tRNA(Ser). Is also able to aminoacylate tRNA(Sec) with serine, to form the misacylated tRNA L-seryl-tRNA(Sec), which will be further converted into selenocysteinyl-tRNA(Sec). The protein is Serine--tRNA ligase of Nitrosopumilus maritimus (strain SCM1).